Reading from the N-terminus, the 123-residue chain is Large ribosomal subunit protein bL12 (123 aa).

Belongs to the bacterial ribosomal protein bL12 family. In terms of assembly, homodimer. Part of the ribosomal stalk of the 50S ribosomal subunit. Forms a multimeric L10(L12)X complex, where L10 forms an elongated spine to which 2 to 4 L12 dimers bind in a sequential fashion. Binds GTP-bound translation factors.

In terms of biological role, forms part of the ribosomal stalk which helps the ribosome interact with GTP-bound translation factors. Is thus essential for accurate translation. The sequence is that of Large ribosomal subunit protein bL12 from Cytophaga hutchinsonii (strain ATCC 33406 / DSM 1761 / CIP 103989 / NBRC 15051 / NCIMB 9469 / D465).